The following is a 427-amino-acid chain: 12-alpha,13-alpha-dihydroxyfumitremorgin C prenyltransferase (427 aa).

Substrate is bound at residue glutamate 94. Residues arginine 105, lysine 192, tyrosine 194, tyrosine 268, glutamine 353, tyrosine 355, tyrosine 419, and tyrosine 423 each coordinate dimethylallyl diphosphate.

The protein belongs to the tryptophan dimethylallyltransferase family.

The enzyme catalyses 12alpha,13alpha-dihydroxyfumitremorgin C + dimethylallyl diphosphate = fumitremorgin B + diphosphate. The protein operates within mycotoxin biosynthesis. Functionally, 12-alpha,13-alpha-dihydroxyfumitremorgin C prenyltransferase; part of the gene cluster that mediates the biosynthesis of fumitremorgins, indole alkaloids that carry not only intriguing chemical structures, but also interesting biological and pharmacological activities. The biosynthesis of fumitremorgin-type alkaloids begins by condensation of the two amino acids L-tryptophan and L-proline to brevianamide F, catalyzed by the non-ribosomal peptide synthetase ftmA. Brevianamide F is then prenylated by the prenyltransferase ftmPT1/ftmB in the presence of dimethylallyl diphosphate, resulting in the formation of tryprostatin B. The three cytochrome P450 monooxygenases, ftmP450-1/ftmC, ftmP450-2/ftmE and ftmP450-3/FtmG, are responsible for the conversion of tryprostatin B to 6-hydroxytryprostatin B, tryprostatin A to fumitremorgin C and fumitremorgin C to 12,13-dihydroxyfumitremorgin C, respectively. The putative methyltransferase ftmMT/ftmD is expected for the conversion of 6-hydroxytryprostatin B to tryprostatin A. FtmPT2/FtmH catalyzes the prenylation of 12,13-dihydroxyfumitre-morgin C in the presence of dimethylallyl diphosphate, resulting in the formation of fumitremorgin B. Fumitremorgin B is further converted to verruculogen by ftmOx1/ftmF via the insertion of an endoperoxide bond between the two prenyl moieties. In some fungal species, verruculogen is further converted to fumitremorgin A, but the enzymes involved in this step have not been identified yet. The protein is 12-alpha,13-alpha-dihydroxyfumitremorgin C prenyltransferase of Aspergillus fumigatus (Neosartorya fumigata).